The sequence spans 195 residues: SXP/RAL-2-like protein 2 (195 aa).

A disordered region spans residues 162 to 195; it reads EKVHGGSHGGLRGGPGGPRDGPRGGPRGGPRGGR. Positions 167–195 are enriched in gly residues; that stretch reads GSHGGLRGGPGGPRDGPRGGPRGGPRGGR.

Belongs to the SXP/RAL-2 family.

The polypeptide is SXP/RAL-2-like protein 2 (Caenorhabditis elegans).